The following is a 458-amino-acid chain: Phosphoglucosamine mutase (458 aa).

Ser-108 serves as the catalytic Phosphoserine intermediate. 4 residues coordinate Mg(2+): Ser-108, Asp-247, Asp-249, and Asp-251. At Ser-108 the chain carries Phosphoserine.

Belongs to the phosphohexose mutase family. It depends on Mg(2+) as a cofactor. In terms of processing, activated by phosphorylation.

The enzyme catalyses alpha-D-glucosamine 1-phosphate = D-glucosamine 6-phosphate. In terms of biological role, catalyzes the conversion of glucosamine-6-phosphate to glucosamine-1-phosphate. In Thiobacillus denitrificans (strain ATCC 25259 / T1), this protein is Phosphoglucosamine mutase.